A 256-amino-acid polypeptide reads, in one-letter code: Putative ankyrin repeat protein PAE1861 (256 aa).

ANK repeat units lie at residues 1 to 30 (MDCN…SPDV), 34 to 63 (YGRT…DPNA), 67 to 92 (EGKT…ASAV), 93 to 122 (GVEE…RPGA), 124 to 151 (HGES…DPNA), 155 to 184 (HGKT…DVNV), 188 to 214 (AGRT…DLNA), and 218 to 245 (MGRT…PVPD).

The chain is Putative ankyrin repeat protein PAE1861 from Pyrobaculum aerophilum (strain ATCC 51768 / DSM 7523 / JCM 9630 / CIP 104966 / NBRC 100827 / IM2).